A 394-amino-acid polypeptide reads, in one-letter code: Quinolinate synthase (394 aa).

Iminosuccinate is bound by residues histidine 57 and serine 74. Residue cysteine 121 participates in [4Fe-4S] cluster binding. Iminosuccinate contacts are provided by residues 153-155 (YMN) and serine 174. Cysteine 250 contributes to the [4Fe-4S] cluster binding site. Iminosuccinate contacts are provided by residues 276-278 (HPE) and threonine 293. Cysteine 340 is a binding site for [4Fe-4S] cluster.

This sequence belongs to the quinolinate synthase family. Type 3 subfamily. Requires [4Fe-4S] cluster as cofactor.

The protein resides in the cytoplasm. The enzyme catalyses iminosuccinate + dihydroxyacetone phosphate = quinolinate + phosphate + 2 H2O + H(+). The protein operates within cofactor biosynthesis; NAD(+) biosynthesis; quinolinate from iminoaspartate: step 1/1. In terms of biological role, catalyzes the condensation of iminoaspartate with dihydroxyacetone phosphate to form quinolinate. The protein is Quinolinate synthase of Nocardioides sp. (strain ATCC BAA-499 / JS614).